We begin with the raw amino-acid sequence, 682 residues long: DNA ligase (682 aa).

NAD(+)-binding positions include 42–46 (DAEYD), 91–92 (SL), and glutamate 124. Lysine 126 (N6-AMP-lysine intermediate) is an active-site residue. NAD(+)-binding residues include arginine 147, glutamate 184, lysine 302, and lysine 326. 4 residues coordinate Zn(2+): cysteine 420, cysteine 423, cysteine 438, and cysteine 444. Residues 603–682 (IADNPLKGKS…QEFIALTGEN (80 aa)) form the BRCT domain.

Belongs to the NAD-dependent DNA ligase family. LigA subfamily. It depends on Mg(2+) as a cofactor. The cofactor is Mn(2+).

The catalysed reaction is NAD(+) + (deoxyribonucleotide)n-3'-hydroxyl + 5'-phospho-(deoxyribonucleotide)m = (deoxyribonucleotide)n+m + AMP + beta-nicotinamide D-nucleotide.. Functionally, DNA ligase that catalyzes the formation of phosphodiester linkages between 5'-phosphoryl and 3'-hydroxyl groups in double-stranded DNA using NAD as a coenzyme and as the energy source for the reaction. It is essential for DNA replication and repair of damaged DNA. This chain is DNA ligase, found in Actinobacillus pleuropneumoniae serotype 3 (strain JL03).